Reading from the N-terminus, the 326-residue chain is MIPALDIDSLEHRLVAGDRAALARAITLVESRRADHQVAARTLLSRLMPLTGRAQRIGITGVPGAGKSTTIERFGCNLVEAGHRVAVLAVDPSSGRHGGSILGDKTRMEQLSVQANAFIRPSPSGGALGGVARKTREAMLLCEAAGFDVVIIETVGVGQSETVVADMVDIFLALLIPGGGDELQGIKKGLIELADLLVINKADADPAKAERSARDYRNALHILTPAHPDWTPPVLTASGLTGQGLDVLWTQILRHREVMTANGARAARRADQDARWMWAMVRDRLEDAFKTAPAVAALVPDLETAVREGEVPASAAADRLLAAFGL.

Residues 61–69, aspartate 203, and 238–240 contribute to the GTP site; these read GVPGAGKST and SGL.

It belongs to the SIMIBI class G3E GTPase family. ArgK/MeaB subfamily.

In terms of biological role, may have GTPase activity. May also bind and hydrolyze ATP. May function as chaperone. The chain is Putative GTPase CC_2483 from Caulobacter vibrioides (strain ATCC 19089 / CIP 103742 / CB 15) (Caulobacter crescentus).